Consider the following 208-residue polypeptide: Tektin bundle-interacting protein 1 (208 aa).

Microtubule inner protein component of sperm flagellar doublet microtubules. As to expression, expressed in trachea multiciliated cells.

Its subcellular location is the cytoplasm. The protein localises to the cytoskeleton. It is found in the cilium axoneme. The protein resides in the flagellum axoneme. Functionally, microtubule inner protein (MIP) part of the dynein-decorated doublet microtubules (DMTs) in cilia axoneme, which is required for motile cilia beating. Located at the center of the tektin bundle where may function to recruit tektins or stabilize the bundle. In Bos taurus (Bovine), this protein is Tektin bundle-interacting protein 1 (TEKTIP1).